We begin with the raw amino-acid sequence, 761 residues long: Elongation factor G, mitochondrial (761 aa).

A mitochondrion-targeting transit peptide spans 1 to 33; the sequence is MTSVLRGVLKTHLPRTLTLPRCARNFQTTTFLR. The 282-residue stretch at 66 to 347 folds into the tr-type G domain; that stretch reads TRLRNIGISA…SVVDYLPQPN (282 aa). GTP contacts are provided by residues 75–82, 146–150, and 200–203; these read AHIDSGKT, DTPGH, and NKMD.

This sequence belongs to the TRAFAC class translation factor GTPase superfamily. Classic translation factor GTPase family. EF-G/EF-2 subfamily.

It localises to the mitochondrion. Its pathway is protein biosynthesis; polypeptide chain elongation. Its function is as follows. Mitochondrial GTPase that catalyzes the GTP-dependent ribosomal translocation step during translation elongation. During this step, the ribosome changes from the pre-translocational (PRE) to the post-translocational (POST) state as the newly formed A-site-bound peptidyl-tRNA and P-site-bound deacylated tRNA move to the P and E sites, respectively. Catalyzes the coordinated movement of the two tRNA molecules, the mRNA and conformational changes in the ribosome. The chain is Elongation factor G, mitochondrial from Candida dubliniensis (strain CD36 / ATCC MYA-646 / CBS 7987 / NCPF 3949 / NRRL Y-17841) (Yeast).